The primary structure comprises 577 residues: Proline--tRNA ligase (577 aa).

This sequence belongs to the class-II aminoacyl-tRNA synthetase family. ProS type 1 subfamily. In terms of assembly, homodimer.

The protein resides in the cytoplasm. It catalyses the reaction tRNA(Pro) + L-proline + ATP = L-prolyl-tRNA(Pro) + AMP + diphosphate. Functionally, catalyzes the attachment of proline to tRNA(Pro) in a two-step reaction: proline is first activated by ATP to form Pro-AMP and then transferred to the acceptor end of tRNA(Pro). As ProRS can inadvertently accommodate and process non-cognate amino acids such as alanine and cysteine, to avoid such errors it has two additional distinct editing activities against alanine. One activity is designated as 'pretransfer' editing and involves the tRNA(Pro)-independent hydrolysis of activated Ala-AMP. The other activity is designated 'posttransfer' editing and involves deacylation of mischarged Ala-tRNA(Pro). The misacylated Cys-tRNA(Pro) is not edited by ProRS. This Helicobacter pylori (strain P12) protein is Proline--tRNA ligase.